Here is a 295-residue protein sequence, read N- to C-terminus: 33 kDa chaperonin (295 aa).

Intrachain disulfides connect C236-C238 and C269-C272.

Belongs to the HSP33 family. Post-translationally, under oxidizing conditions two disulfide bonds are formed involving the reactive cysteines. Under reducing conditions zinc is bound to the reactive cysteines and the protein is inactive.

The protein localises to the cytoplasm. Functionally, redox regulated molecular chaperone. Protects both thermally unfolding and oxidatively damaged proteins from irreversible aggregation. Plays an important role in the bacterial defense system toward oxidative stress. This chain is 33 kDa chaperonin, found in Citrifermentans bemidjiense (strain ATCC BAA-1014 / DSM 16622 / JCM 12645 / Bem) (Geobacter bemidjiensis).